Reading from the N-terminus, the 486-residue chain is BTB/POZ domain and ankyrin repeat-containing protein NBCL (486 aa).

A BTB domain is found at 25–115 (SDVTFSVEGR…LYSGQVSIVP (91 aa)). The C2HC NPR-type zinc-finger motif lies at 121–135 (RPNCGERGCWHTHCS). Residues Cys-124, Cys-129, His-131, and Cys-134 each coordinate Zn(2+). ANK repeat units follow at residues 257–286 (QKIRRMRRALDSSDVELVKLMVMGEGLNLD), 287–316 (EALALHYAVENCSREVVKALLELGAADVNY), 321–350 (AGKTPLHIAAEMVSPDMVAVLLDHHADPNV), and 354–388 (DNVTPLDILRTLTSDFLFKGAIPGLTHIEPNKLRL). Disordered stretches follow at residues 403 to 441 (EEGNANNNPPSSTTTTLPMYHHPMNDDHNSSSSSGNNHN) and 464 to 486 (QMSDDHGGRHGDPAMYHHSHHDY). 2 stretches are compositionally biased toward low complexity: residues 406 to 418 (NANNNPPSSTTTT) and 432 to 441 (SSSSSGNNHN). Basic and acidic residues predominate over residues 466 to 475 (SDDHGGRHGD).

This sequence belongs to the plant 'ANKYRIN-BTB/POZ' family. 'NOOT-BOP-COCH-like' (NBCL) subfamily. Homodimer.

Its subcellular location is the nucleus. It is found in the cytoplasm. The protein resides in the cell membrane. It functions in the pathway protein modification; protein ubiquitination. In terms of biological role, may act as a substrate-specific adapter of an E3 ubiquitin-protein ligase complex (CUL3-RBX1-BTB) which mediates the ubiquitination and subsequent proteasomal degradation of target proteins. Transcriptional co-regulator involved in the promotion of leaf and floral meristem fate and determinacy. Necessary for the development of stipules at the base of petioles. Required for the abscission of senescent organs, probably by regulating the cell wall disorganization in abscission zones (AZs, e.g. pulvini at the base of leaves). Promotes slightly root-cap border cells separation from the root tip. Involved in the coordination of the symbiotic nodule developmental program; promotes the formation of root nodules by interacting directly with APP1 to modulate the expression of the nuclear transcription factor Y subunit (NF-YA1), a key nodulin. Necessary for the robust maintenance of nodule identity throughout the nodule developmental program. This Lupinus angustifolius (Narrow-leaved blue lupine) protein is BTB/POZ domain and ankyrin repeat-containing protein NBCL.